The primary structure comprises 260 residues: 3'-5' ssDNA/RNA exonuclease TatD (260 aa).

Positions 92, 128, and 153 each coordinate a divalent metal cation.

Belongs to the metallo-dependent hydrolases superfamily. TatD-type hydrolase family. TatD subfamily. In terms of assembly, monomer. Mg(2+) serves as cofactor.

It is found in the cytoplasm. 3'-5' exonuclease that prefers single-stranded DNA and RNA. May play a role in the H(2)O(2)-induced DNA damage repair. The protein is 3'-5' ssDNA/RNA exonuclease TatD of Pantoea ananatis (strain LMG 20103).